Consider the following 553-residue polypeptide: MGANQFDVVVVGSGAAGLYACLCLPGHYRVALVTKAELKTGASDWAQGGIAAAIAPTDSPQSHYEDTLAAGAGLCDGEAVDFLVNHAPQAIAELVQFGVSFDRHGQHLALTLEAAHSQPRVLHAADTTGRAIVSTLMGQVQARPNVEIFSQAIALSLNIEPTTGHCRGIQVFVNQTIETFHSRAVLLATGGGGQVFAQTTNPKVSTGDGIALAWRSGAQVRDLEFFQFHPTALTKPGVPHFLISEAVRGEGAHLLDRQGKRFAFDYHPRGELAPRDVVSRAIFQHLANTEKDPTQATVFLDLSPIEPERIQRRFPNIIRRCLHWGVDIFREPIPVAPAAHYWMGGITTDINCQTTIPGLYALGETASTGVHGANRLASNSLLECIVFASQLRNLSLPPLASSDSNVNQSIKEIRLDTTNDLALLNHWRSELPRLMWQTAGICRQAETLQMAIAKLEQWQEQWQQLSSSKLLAHLPEDQKISLSGPGLNEFMQLWAETHNLLDIAQLILTSALFREESRGGHYRLDCPDTKREWQSHTVIEGTRVFLQPSQSQD.

FAD-binding positions include 13–16 (SGAA), lysine 35, 42–49 (ASDWAQGG), and aspartate 208. The active-site Proton donor/acceptor is the arginine 275. FAD is bound by residues glutamate 364 and 380–381 (SL).

It belongs to the FAD-dependent oxidoreductase 2 family. NadB subfamily. It depends on FAD as a cofactor.

Its subcellular location is the cytoplasm. It catalyses the reaction L-aspartate + O2 = iminosuccinate + H2O2. It participates in cofactor biosynthesis; NAD(+) biosynthesis; iminoaspartate from L-aspartate (oxidase route): step 1/1. Its function is as follows. Catalyzes the oxidation of L-aspartate to iminoaspartate, the first step in the de novo biosynthesis of NAD(+). This is L-aspartate oxidase (nadB) from Synechocystis sp. (strain ATCC 27184 / PCC 6803 / Kazusa).